Consider the following 374-residue polypeptide: Queuine tRNA-ribosyltransferase (374 aa).

Catalysis depends on Asp-89, which acts as the Proton acceptor. Residues 89 to 93 (DSGGF), Asp-143, Gln-187, and Gly-214 contribute to the substrate site. The segment at 245-251 (GVGKPED) is RNA binding. The Nucleophile role is filled by Asp-264. Positions 269–273 (TRNAR) are RNA binding; important for wobble base 34 recognition. Zn(2+) contacts are provided by Cys-302, Cys-304, Cys-307, and His-333.

The protein belongs to the queuine tRNA-ribosyltransferase family. In terms of assembly, homodimer. Within each dimer, one monomer is responsible for RNA recognition and catalysis, while the other monomer binds to the replacement base PreQ1. It depends on Zn(2+) as a cofactor.

The catalysed reaction is 7-aminomethyl-7-carbaguanine + guanosine(34) in tRNA = 7-aminomethyl-7-carbaguanosine(34) in tRNA + guanine. It functions in the pathway tRNA modification; tRNA-queuosine biosynthesis. Catalyzes the base-exchange of a guanine (G) residue with the queuine precursor 7-aminomethyl-7-deazaguanine (PreQ1) at position 34 (anticodon wobble position) in tRNAs with GU(N) anticodons (tRNA-Asp, -Asn, -His and -Tyr). Catalysis occurs through a double-displacement mechanism. The nucleophile active site attacks the C1' of nucleotide 34 to detach the guanine base from the RNA, forming a covalent enzyme-RNA intermediate. The proton acceptor active site deprotonates the incoming PreQ1, allowing a nucleophilic attack on the C1' of the ribose to form the product. After dissociation, two additional enzymatic reactions on the tRNA convert PreQ1 to queuine (Q), resulting in the hypermodified nucleoside queuosine (7-(((4,5-cis-dihydroxy-2-cyclopenten-1-yl)amino)methyl)-7-deazaguanosine). In Photorhabdus laumondii subsp. laumondii (strain DSM 15139 / CIP 105565 / TT01) (Photorhabdus luminescens subsp. laumondii), this protein is Queuine tRNA-ribosyltransferase.